A 339-amino-acid polypeptide reads, in one-letter code: MCAQYCISFADVEKAHINIQDSIHLTPVLTSSILNQIAGRNLFFKCELFQKTGSFKIRGALNAIRGLIPDTPEEKPKAVVTHSSGNHGQALTYAAKLEGIPAYIVVPQTAPNCKKLAIQAYGASIVYCDPSDESREKVTQRIMQETEGILVHPNQEPAVIAGQGTIALEVLNQVPLVDALVVPVGGGGMVAGIAITIKALKPSVKVYAAEPSNADDCYQSKLKGELTPNLHPPETIADGVKSSIGLNTWPIIRDLVDDVFTVTEDEIKYATQLVWGRMKLLIEPTAGVALAAVLSQHFQTVSPEVKNVCIVLSGGNVDLTSLNWVGQAERPAPYQTVSV.

E13 lines the Mg(2+) pocket. The ATP site is built by S31, S32, I33, K51, and T52. K56 acts as the Proton acceptor in catalysis. K56 is modified (N6-(pyridoxal phosphate)lysine). A Ca(2+)-binding site is contributed by P69. Position 71 is a phosphothreonine (T71). T81 contributes to the Ca(2+) binding site. Catalysis depends on S84, which acts as the Proton acceptor. Pyridoxal 5'-phosphate is bound at residue N86. An ATP-binding site is contributed by Q89. Position 113 is an S-nitrosocysteine (C113). An ATP-binding site is contributed by Y121. N154 is a pyridoxal 5'-phosphate binding site. D178 contacts Mg(2+). Residues G185, G186, G187, G188, and M189 each coordinate pyridoxal 5'-phosphate. Residues E210, A214, D216, and N247 each contribute to the Mg(2+) site. Positions 210, 214, 216, and 247 each coordinate Ca(2+). 3 residues coordinate Mn(2+): E210, A214, and D216. K279 serves as a coordination point for ATP. S313 is a binding site for pyridoxal 5'-phosphate. N316 lines the ATP pocket.

Belongs to the serine/threonine dehydratase family. In terms of assembly, homodimer. Requires Mg(2+) as cofactor. The cofactor is Mn(2+). It depends on Ca(2+) as a cofactor. Pyridoxal 5'-phosphate is required as a cofactor. Post-translationally, S-nitrosylated, leading to decrease the enzyme activity. As to expression, expressed in the hippocampus (at protein level). Expressed in the small intestine.

It carries out the reaction L-serine = D-serine. The enzyme catalyses D-serine = pyruvate + NH4(+). It catalyses the reaction L-serine = pyruvate + NH4(+). Its activity is regulated as follows. Allosterically activated by magnesium, and possibly also other divalent metal cations. Allosterically activated by ATP, ADP or GTP. Its function is as follows. Catalyzes the synthesis of D-serine from L-serine. D-serine is a key coagonist with glutamate at NMDA receptors. Has dehydratase activity towards both L-serine and D-serine. The polypeptide is Serine racemase (Srr) (Mus musculus (Mouse)).